A 32-amino-acid polypeptide reads, in one-letter code: Zinc metalloproteinase carinactivase-1 catalytic subunit (32 aa).

The region spanning 10 to 32 (FIKLVIVVDHSMVXKXNNDLIAI) is the Peptidase M12B domain.

This sequence belongs to the venom metalloproteinase (M12B) family. P-III subfamily. P-IIId sub-subfamily. As to quaternary structure, heterodimer of a metalloproteinase subunit and a regulatory subunit comprising two disulfide-linked lectins (14 kDa and 17 kDa chains) (AC Q9PRP7 and AC Q9PRP8). Zn(2+) serves as cofactor. Expressed by the venom gland.

Its subcellular location is the secreted. Functionally, calcium-dependent prothrombin (F2) activator. This protein may activate prothrombin via recognition by the regulatory subunit of the calcium ion bound conformation of its gamma-carboxyglutamic acid (GLA) domain, and the subsequent conversion of prothrombin to active thrombin is catalyzed by the catalytic subunit. The protein is Zinc metalloproteinase carinactivase-1 catalytic subunit of Echis carinatus (Saw-scaled viper).